A 332-amino-acid chain; its full sequence is tRNA dimethylallyltransferase 2 (332 aa).

Residue 15–22 (GPTASGKT) coordinates ATP. 17–22 (TASGKT) contacts substrate. Interaction with substrate tRNA stretches follow at residues 40-43 (DSVM) and 164-168 (QRIQR).

The protein belongs to the IPP transferase family. Monomer. Mg(2+) serves as cofactor.

The enzyme catalyses adenosine(37) in tRNA + dimethylallyl diphosphate = N(6)-dimethylallyladenosine(37) in tRNA + diphosphate. Its function is as follows. Catalyzes the transfer of a dimethylallyl group onto the adenine at position 37 in tRNAs that read codons beginning with uridine, leading to the formation of N6-(dimethylallyl)adenosine (i(6)A). The sequence is that of tRNA dimethylallyltransferase 2 from Hahella chejuensis (strain KCTC 2396).